Reading from the N-terminus, the 619-residue chain is Guanylate cyclase soluble subunit beta-1 (619 aa).

H105 lines the heme pocket. Residues 421 to 554 (TILFSGIVGF…NTVNLTSRTE (134 aa)) enclose the Guanylate cyclase domain.

It belongs to the adenylyl cyclase class-4/guanylyl cyclase family. The active enzyme is formed by a heterodimer of an alpha and a beta subunit. Heterodimer with GUCY1A1. Can also form inactive homodimers in vitro. The cofactor is heme. Lung and brain.

Its subcellular location is the cytoplasm. The enzyme catalyses GTP = 3',5'-cyclic GMP + diphosphate. Activated by nitric oxide in the presence of magnesium or manganese ions, binding of NO to the heme iron increases catalytic activity up to 400 folds. Functionally, mediates responses to nitric oxide (NO) by catalyzing the biosynthesis of the signaling molecule cGMP. This Bos taurus (Bovine) protein is Guanylate cyclase soluble subunit beta-1 (GUCY1B1).